The primary structure comprises 590 residues: Selenoprotein N (590 aa).

The segment at 1–26 (MGRARPGQRGPPSPGPAAQPPAPPRR) is disordered. Residues 1–43 (MGRARPGQRGPPSPGPAAQPPAPPRRRARSLALLGALLAAAAA) form the signal peptide. The span at 9–23 (RGPPSPGPAAQPPAP) shows a compositional bias: pro residues. Positions 67–102 (TLGTDGLFLFSSLDTDGDMYISPEEFKPIAEKLTGS) constitute an EF-hand domain. N-linked (GlcNAc...) asparagine glycosylation is present at Asn126. Residue Sec127 is a non-standard amino acid, selenocysteine. A glycan (N-linked (GlcNAc...) asparagine) is linked at Asn190. Residue Sec462 is a non-standard amino acid, selenocysteine. N-linked (GlcNAc...) asparagine glycans are attached at residues Asn483, Asn505, and Asn531.

As to quaternary structure, interacts with RYR1, RYR2 and RYR3. In terms of processing, N-glycosylated. As to expression, isoform 1 and isoform 2 are expressed in skeletal muscle, brain, lung and placenta. Isoform 2 is also expressed in heart, diaphragm and stomach.

Its subcellular location is the endoplasmic reticulum membrane. Plays an important role in cell protection against oxidative stress and in the regulation of redox-related calcium homeostasis. Regulates the calcium level of the ER by protecting the calcium pump ATP2A2 against the oxidoreductase ERO1A-mediated oxidative damage. Within the ER, ERO1A activity increases the concentration of H(2)O(2), which attacks the luminal thiols in ATP2A2 and thus leads to cysteinyl sulfenic acid formation (-SOH) and SEPN1 reduces the SOH back to free thiol (-SH), thus restoring ATP2A2 activity. Acts as a modulator of ryanodine receptor (RyR) activity: protects RyR from oxidation due to increased oxidative stress, or directly controls the RyR redox state, regulating the RyR-mediated calcium mobilization required for normal muscle development and differentiation. In terms of biological role, essential for muscle regeneration and satellite cell maintenance in skeletal muscle. This chain is Selenoprotein N, found in Homo sapiens (Human).